Consider the following 720-residue polypeptide: Mitogen-activated protein kinase 6 (720 aa).

M1 participates in a covalent cross-link: Peptide (Met-Gly) (interchain with G-Cter in ubiquitin). Positions 20-316 constitute a Protein kinase domain; the sequence is YMDLKPLGCG…AEEALSHPYM (297 aa). Residues 26–34 and K49 each bind ATP; that span reads LGCGGNGLV. The active-site Proton acceptor is the D152. S189 is subject to Phosphoserine; by PAK1, PAK2 and PAK3. The short motif at 189–191 is the SEG motif element; that stretch reads SEG. The short motif at 332-337 is the FRIEDE motif element; the sequence is FHIEDE. Phosphoserine occurs at positions 386, 554, and 556. Residues 638 to 657 are disordered; the sequence is SEMLETEPVEEGKRGERGRE. Positions 647–657 are enriched in basic and acidic residues; sequence EEGKRGERGRE. S683 is subject to Phosphoserine. Polar residues predominate over residues 700-714; sequence AMKSSPQIPHKTYSS. Positions 700-720 are disordered; that stretch reads AMKSSPQIPHKTYSSILKHLN.

Belongs to the protein kinase superfamily. CMGC Ser/Thr protein kinase family. MAP kinase subfamily. Heterodimer with ERK4/MAPK4. Interacts with (via FRIEDE motif) MAPKAPK5. Interacts with UBE3A; this interaction may be indirect and mediated by HERC2, possibly via HERC2 interaction with NEURL4. Mg(2+) is required as a cofactor. Post-translationally, phosphorylated at Ser-189 by PAK1, PAK2 and PAK3 resulting in catalytic activation. Phosphorylated by MAPKAPK5 at other sites. In terms of processing, ubiquitination at Met-1 leads to degradation by the proteasome pathway.

It is found in the cytoplasm. The protein resides in the nucleus. It catalyses the reaction L-seryl-[protein] + ATP = O-phospho-L-seryl-[protein] + ADP + H(+). It carries out the reaction L-threonyl-[protein] + ATP = O-phospho-L-threonyl-[protein] + ADP + H(+). With respect to regulation, activated by phosphorylation at Ser-189. In terms of biological role, atypical MAPK protein. Phosphorylates microtubule-associated protein 2 (MAP2) and MAPKAPK5. The precise role of the complex formed with MAPKAPK5 is still unclear, but the complex follows a complex set of phosphorylation events: upon interaction with atypical MAPKAPK5, ERK3/MAPK6 is phosphorylated at Ser-189 and then mediates phosphorylation and activation of MAPKAPK5, which in turn phosphorylates ERK3/MAPK6. May promote entry in the cell cycle. The sequence is that of Mitogen-activated protein kinase 6 (Mapk6) from Mus musculus (Mouse).